Reading from the N-terminus, the 263-residue chain is MADILKSVKRIVVKVGSSILVDNQEIAAHRIEALCQFIADLQTKYEVILVTSGAVAAGYTKKEMDKSYVPNKQALASMGQPLLMHMYYTELQKHGILCAQMLLAAYDLDSRKRTINAHNTIEVLISHKVIPIINENDATALEELVFGDNDRLSALVAHHFKANLLVILSDIDGYYTENPRTSTNATIRSVVHELSPDDLVAEATPNNRFATGGIVTKLQAAQFLLERGGKMYLSSGFHLEKARQFLLGGSHEIGTLFYSRVSS.

Lysine 14 provides a ligand contact to ATP. Positions 52, 137, and 149 each coordinate substrate. Residues 169–170 (SD) and 211–217 (TGGIVTK) contribute to the ATP site.

This sequence belongs to the glutamate 5-kinase family. In terms of assembly, homotetramer; oligomerization is not affected by L-proline feedback inhibition. Requires Mg(2+) as cofactor.

It carries out the reaction L-glutamate + ATP = L-glutamyl 5-phosphate + ADP. It functions in the pathway amino-acid biosynthesis; L-proline biosynthesis; L-glutamate 5-semialdehyde from L-glutamate: step 1/2. Its activity is regulated as follows. Inhibited by L-proline as part of a negative feedback loop. Also inhibited by L-proline analogs 3,4-dehydro-L-proline, L-azetidine-2-carboxylic acid and L-4-thiazolidine carboxylic acid. Functionally, catalyzes the transfer of a phosphate group to glutamate to form L-glutamate 5-phosphate. May be important for growth and survival. The chain is Glutamate 5-kinase from Leishmania donovani.